Reading from the N-terminus, the 336-residue chain is Phospho-N-acetylmuramoyl-pentapeptide-transferase (336 aa).

10 helical membrane-spanning segments follow: residues 3–23, 53–73, 78–98, 118–138, 143–163, 174–194, 200–220, 226–246, 254–274, and 316–336; these read LTLI…PYFI, GGTV…LFSI, SLAL…IGFL, LALQ…PSGI, VFGY…FWVV, GIDG…GVIA, FDVL…FCFN, VFMG…ISIA, LIIG…VFYF, and AFLW…LYVF.

Belongs to the glycosyltransferase 4 family. MraY subfamily. Requires Mg(2+) as cofactor.

It localises to the cell membrane. It catalyses the reaction UDP-N-acetyl-alpha-D-muramoyl-L-alanyl-gamma-D-glutamyl-L-lysyl-D-alanyl-D-alanine + di-trans,octa-cis-undecaprenyl phosphate = Mur2Ac(oyl-L-Ala-gamma-D-Glu-L-Lys-D-Ala-D-Ala)-di-trans,octa-cis-undecaprenyl diphosphate + UMP. Its pathway is cell wall biogenesis; peptidoglycan biosynthesis. Functionally, catalyzes the initial step of the lipid cycle reactions in the biosynthesis of the cell wall peptidoglycan: transfers peptidoglycan precursor phospho-MurNAc-pentapeptide from UDP-MurNAc-pentapeptide onto the lipid carrier undecaprenyl phosphate, yielding undecaprenyl-pyrophosphoryl-MurNAc-pentapeptide, known as lipid I. The sequence is that of Phospho-N-acetylmuramoyl-pentapeptide-transferase from Streptococcus pyogenes serotype M18 (strain MGAS8232).